Consider the following 417-residue polypeptide: DNA primase small subunit (417 aa).

An N-acetylmethionine modification is found at Met1. Residues Glu44, Asp109, and Asp111 contribute to the active site. Residues Asp109 and Asp111 each contribute to the Mg(2+) site. Asp109 and Asp111 together coordinate Mn(2+). 109 to 111 contributes to the a ribonucleoside 5'-triphosphate binding site; that stretch reads DID. Zn(2+)-binding residues include Cys121, Cys122, Cys128, and Cys131. The short motif at 121–131 is the Zinc knuckle motif element; sequence CCSSADICSKC. 160 to 166 provides a ligand contact to a ribonucleoside 5'-triphosphate; it reads SGRRGVH. Asp305 is a binding site for Mg(2+). Asp305 is a Mn(2+) binding site. A ribonucleoside 5'-triphosphate is bound by residues 314 to 317 and His323; that span reads HLLK.

It belongs to the eukaryotic-type primase small subunit family. As to quaternary structure, heterodimer of a catalytic subunit PRIM1 and a regulatory subunit PRIM2, also known as the DNA primase complex. Interacts with PRIM2/p58 (via C-terminus). Component of the alpha DNA polymerase complex (also known as the alpha DNA polymerase-primase complex) consisting of four subunits: the catalytic subunit POLA1, the regulatory subunit POLA2, and the primase complex subunits PRIM1 and PRIM2 respectively. Within the complex, POLA1 directly interacts with PRIM2. Mg(2+) serves as cofactor. Requires Mn(2+) as cofactor.

The catalysed reaction is ssDNA + n NTP = ssDNA/pppN(pN)n-1 hybrid + (n-1) diphosphate.. The presence of the regulatory subunit PRIM2/p58 accelerates the kinetics of initiation and primer extension. Its function is as follows. Catalytic subunit of the DNA primase complex and component of the DNA polymerase alpha complex (also known as the alpha DNA polymerase-primase complex) which play an essential role in the initiation of DNA synthesis. During the S phase of the cell cycle, the DNA polymerase alpha complex (composed of a catalytic subunit POLA1, an accessory subunit POLA2 and two primase subunits, the catalytic subunit PRIM1 and the regulatory subunit PRIM2) is recruited to DNA at the replicative forks via direct interactions with MCM10 and WDHD1. The primase subunit of the polymerase alpha complex initiates DNA synthesis by oligomerising short RNA primers on both leading and lagging strands. These primers are initially extended by the polymerase alpha catalytic subunit and subsequently transferred to polymerase delta and polymerase epsilon for processive synthesis on the lagging and leading strand, respectively. In the primase complex, both subunits are necessary for the initial di-nucleotide formation, but the extension of the primer depends only on the catalytic subunit. Can add both ribo- and deoxynucleotides during elongation of the primers. Synthesizes 9-mer RNA primers (also known as the 'unit length' RNA primers). Incorporates only ribonucleotides in the presence of ribo- and deoxy-nucleotide triphosphates (rNTPs, dNTPs). Requires template thymine or cytidine to start the RNA primer synthesis, with an adenine or guanine at its 5'-end. Binds single stranded DNA. The sequence is that of DNA primase small subunit (Prim1) from Mus musculus (Mouse).